The primary structure comprises 569 residues: Urease subunit alpha (569 aa).

Residues 131–569 enclose the Urease domain; that stretch reads GSIDTHIHFI…VPMAQRYFLL (439 aa). Ni(2+)-binding residues include His-136, His-138, and Lys-219. Lys-219 carries the post-translational modification N6-carboxylysine. His-221 provides a ligand contact to substrate. Residues His-248 and His-274 each contribute to the Ni(2+) site. His-322 functions as the Proton donor in the catalytic mechanism. Asp-362 lines the Ni(2+) pocket.

It belongs to the metallo-dependent hydrolases superfamily. Urease alpha subunit family. Heterotrimer of UreA (gamma), UreB (beta) and UreC (alpha) subunits. Three heterotrimers associate to form the active enzyme. Ni cation serves as cofactor. Carboxylation allows a single lysine to coordinate two nickel ions.

The protein resides in the cytoplasm. The catalysed reaction is urea + 2 H2O + H(+) = hydrogencarbonate + 2 NH4(+). Its pathway is nitrogen metabolism; urea degradation; CO(2) and NH(3) from urea (urease route): step 1/1. The protein is Urease subunit alpha of Prochlorococcus marinus (strain AS9601).